The sequence spans 326 residues: Prenyl transferase nodC (326 aa).

The helical transmembrane segment at 8–28 (LAAVLFSALFSLGVILVHLPW) threads the bilayer. His95 lines the isopentenyl diphosphate pocket. 2 residues coordinate Mg(2+): Asp102 and Asp106. A dimethylallyl diphosphate-binding site is contributed by Arg111. A glycan (N-linked (GlcNAc...) asparagine) is linked at Asn139. Lys195 provides a ligand contact to dimethylallyl diphosphate. N-linked (GlcNAc...) asparagine glycosylation is present at Asn210.

It belongs to the FPP/GGPP synthase family.

The protein resides in the membrane. Its pathway is secondary metabolite biosynthesis. Its function is as follows. Cytochrome P450 monooxygenase; part of the gene cluster that mediates the biosynthesis of the indole diterpenes nodulisporic acids (NA). Nodulisporic acid A (NAA) and its chemically modified derivatives are of particular significance because of their highly potent insecticidal activity against blood-feeding arthropods and lack of observable adverse effects on mammals, in particular the tremogenicity associated with the paspaline-derived IDTs is not observed. The geranylgeranyl diphosphate (GGPP) synthase ggs1, localized outside of the cluster, is proposed to catalyze the first step in nodulisporic acid biosynthesis via conversion of farnesyl pyrophosphate and isopentyl pyrophosphate into geranylgeranyl pyrophosphate (GGPP). Condensation of indole-3-glycerol phosphate with GGPP by the prenyl transferase nodC then forms 3-geranylgeranylindole (3-GGI). Epoxidation by the FAD-dependent monooxygenase nodM leads to a single-epoxidized-GGI that is substrate of the terpene cyclase nodB for cyclization to yield emindole SB. The terminal methyl carbon, C28, of emindole SB is then oxidized by the cytochrome P450 monooxygenase nodW to produce nodulisporic acid F (NAF), the pentacyclic core of NAA. NAF is converted to nodulisporic acid E (NAE) via prenylation. This step is probably performed by one of the indole diterpene prenyltransferases nodD1 or nodD2. Several oxidation steps performed by the FAD-linked oxidoreductase nodO and one of the cytochrome P450 monooxygenase nodR, nodX or nodZ further convert NAE to nodulisporic acid D (NAD). NAD is substrate of cytochrome P450 monooxygenase nodJ to produce the precursor of nodulisporic acid C (NAC), converted to NAC by one of the indole diterpene prenyltransferases nodD1 or nodD2. The FAD-dependent monooxygenase nodY2 then oxidizes NAC to nodulisporic acid B (NAB). Finally NAB is converted to NAA by one of the cytochrome P450 monooxygenases nodR, nodX or nodZ. This is Prenyl transferase nodC from Hypoxylon pulicicidum.